Consider the following 365-residue polypeptide: Cytoplasmic tRNA 2-thiolation protein 1 (365 aa).

It belongs to the TtcA family. CTU1/NCS6/ATPBD3 subfamily.

It is found in the cytoplasm. The protein operates within tRNA modification; 5-methoxycarbonylmethyl-2-thiouridine-tRNA biosynthesis. In terms of biological role, plays a central role in 2-thiolation of mcm(5)S(2)U at tRNA wobble positions of tRNA(Lys), tRNA(Glu) and tRNA(Gln). Directly binds tRNAs and probably acts by catalyzing adenylation of tRNAs, an intermediate required for 2-thiolation. It is unclear whether it acts as a sulfurtransferase that transfers sulfur from thiocarboxylated URM1 onto the uridine of tRNAs at wobble position. Prior mcm(5) tRNA modification by the elongator complex is required for 2-thiolation. May also be involved in protein urmylation. In Yarrowia lipolytica (strain CLIB 122 / E 150) (Yeast), this protein is Cytoplasmic tRNA 2-thiolation protein 1.